A 494-amino-acid chain; its full sequence is Putative bifunctional dihydrofolate reductase-thymidylate synthase (494 aa).

The region spanning 1-167 is the DHFR domain; the sequence is MGIGKDGTLP…IKHSFISFVR (167 aa). 2–8 serves as a coordination point for NADP(+); the sequence is GIGKDGT. Position 16 (D16) interacts with substrate. NADP(+)-binding positions include 40–42 and 61–64; these read RKT and LTRS. Residue I103 participates in substrate binding. 104–111 lines the NADP(+) pocket; that stretch reads GGGEILRQ. T124 contributes to the substrate binding site. The tract at residues 170–494 is thymidylate synthase; that stretch reads KSIAEANDSS…HHKIEMKMAV (325 aa). Residue R231 coordinates dUMP. C376 is a catalytic residue. Residues H377, 395 to 399, N407, and 437 to 439 each bind dUMP; these read QRSAD and HVY.

This sequence in the N-terminal section; belongs to the dihydrofolate reductase family. In the C-terminal section; belongs to the thymidylate synthase family.

The catalysed reaction is (6S)-5,6,7,8-tetrahydrofolate + NADP(+) = 7,8-dihydrofolate + NADPH + H(+). It carries out the reaction dUMP + (6R)-5,10-methylene-5,6,7,8-tetrahydrofolate = 7,8-dihydrofolate + dTMP. The protein operates within cofactor biosynthesis; tetrahydrofolate biosynthesis; 5,6,7,8-tetrahydrofolate from 7,8-dihydrofolate: step 1/1. In terms of biological role, bifunctional enzyme. Involved in de novo dTMP biosynthesis. Key enzyme in folate metabolism. Can play two different roles depending on the source of dihydrofolate: de novo synthesis of tetrahydrofolate or recycling of the dihydrofolate released as one of the end products of the TS catalyzed reaction. Catalyzes an essential reaction for de novo glycine and purine synthesis, DNA precursor synthesis, and for the conversion of dUMP to dTMP. This Oryza sativa subsp. japonica (Rice) protein is Putative bifunctional dihydrofolate reductase-thymidylate synthase.